The following is a 316-amino-acid chain: Transcription factor MafB (316 aa).

Disordered regions lie at residues 40 to 78 (PDRA…SPTE) and 116 to 204 (HQMP…EDRF). Over residues 55–77 (SVSSTPISTPCSSVPSSPSFSPT) the composition is skewed to low complexity. Basic residues-rich tracts occupy residues 130 to 144 (GHHH…HQNH) and 160 to 172 (QHPH…HHHQ). Residues 177-198 (PSGSSSSSQQLQNSHQQHQNSS) are compositionally biased toward low complexity. The segment at 231-256 (RLKQKRRTLKNRGYAQSCRFKRVQQK) is basic motif. In terms of domain architecture, bZIP spans 231–294 (RLKQKRRTLK…DAYKIKCEKL (64 aa)). The interval 259-280 (LENEKTQLIQQVEQLKLEVSRL) is leucine-zipper.

The protein belongs to the bZIP family. Maf subfamily. Homodimer or heterodimer with other bHLH-Zip transcription factors. Binds DNA as a homodimer or a heterodimer.

The protein resides in the nucleus. Functionally, acts as a transcriptional activator or repressor. Implicated in the regulation of cell-type specific gene expression and play a role in inductive events during lens development. This is Transcription factor MafB (mafb) from Xenopus tropicalis (Western clawed frog).